The primary structure comprises 445 residues: Fasciclin-like arabinogalactan protein 16 (445 aa).

The N-terminal stretch at 1 to 23 (MDSSYGATKFLLLLFLTTSIATA) is a signal peptide. 2 FAS1 domains span residues 35–173 (NSNS…ERLL) and 257–400 (VKDF…DGVL). Asn-72 and Asn-279 each carry an N-linked (GlcNAc...) asparagine glycan.

This sequence belongs to the fasciclin-like AGP family.

Its subcellular location is the secreted. Functionally, may be a cell surface adhesion protein. This Arabidopsis thaliana (Mouse-ear cress) protein is Fasciclin-like arabinogalactan protein 16 (FLA16).